Consider the following 744-residue polypeptide: Collagen alpha-1(VIII) chain (744 aa).

The signal sequence occupies residues 1–24 (MAVPPRPLQLLGILFIISLNSVRL). Residues 29 to 118 (AYYGIKPLPP…KGEVPLASLR (90 aa)) form a nonhelical region (NC2) region. The segment covering 101–110 (KEVVPKKGKG) has biased composition (basic and acidic residues). Disordered stretches follow at residues 101–395 (KEVV…EPGL), 412–439 (GPKG…GFPG), and 457–590 (GPIG…DMGL). The triple-helical region (COL1) stretch occupies residues 119 to 572 (GEQGPRGEPG…PGPPGPPGPP (454 aa)). Residues 129–138 (PRGPPGPPGL) show a composition bias toward pro residues. Over residues 169 to 191 (KPGAMGMPGAKGEIGPKGEIGPM) the composition is skewed to low complexity. Gly residues predominate over residues 204–218 (GLPGIGKPGGPGLPG). Over residues 298–307 (PQGLIGVPGV) the composition is skewed to low complexity. 2 stretches are compositionally biased toward gly residues: residues 329 to 338 (GFPGGKGEQG) and 412 to 421 (GPKGEGGVVG). Low complexity-rich tracts occupy residues 470-507 (LPGL…VGPS) and 548-557 (PGALGPQGQP). The span at 559 to 579 (LPGPPGPPGPPGPPAVMPTPS) shows a compositional bias: pro residues. The interval 573–744 (AVMPTPSPQG…SFSGYLLYPM (172 aa)) is nonhelical region (NC1). The C1q domain maps to 611–744 (PAYEMPAFTA…SFSGYLLYPM (134 aa)).

In terms of assembly, homotrimers, or heterotrimers in association with alpha 2(VIII) type collagens. Four homotrimers can form a tetrahedron stabilized by central interacting C-terminal NC1 trimers. Prolines at the third position of the tripeptide repeating unit (G-X-Y) are hydroxylated in some or all of the chains. In terms of processing, proteolytically cleaved by neutrophil elastase, in vitro. Proteolytic processing produces the C-terminal NC1 domain fragment, vastatin. In terms of tissue distribution, high levels in calvarium, eye and skin of newborn mice; also in various epithelial, endothelial and mesenchymal cells.

The protein localises to the secreted. It localises to the extracellular space. Its subcellular location is the extracellular matrix. The protein resides in the basement membrane. Functionally, macromolecular component of the subendothelium. Major component of the Descemet's membrane (basement membrane) of corneal endothelial cells. Also a component of the endothelia of blood vessels. Necessary for migration and proliferation of vascular smooth muscle cells and thus, has a potential role in the maintenance of vessel wall integrity and structure, in particular in atherogenesis. In terms of biological role, vastatin, the C-terminal fragment comprising the NC1 domain, inhibits aortic endothelial cell proliferation and causes cell apoptosis. The chain is Collagen alpha-1(VIII) chain (Col8a1) from Mus musculus (Mouse).